The primary structure comprises 30 residues: Dermaseptin-S3 (30 aa).

Belongs to the frog skin active peptide (FSAP) family. Dermaseptin subfamily. Monomer and oligomer. Forms aggregates in aqueous environments. In terms of tissue distribution, expressed by the skin glands.

The protein resides in the secreted. Potent antimicrobial peptide with activity against bacteria and protozoa. Also has activity against fungi. Probably acts by disturbing membrane functions with its amphipathic structure. Binds to healthy erythrocytes (this binding is receptor independent), but has very weak hemolytic activity. Does not bind to P.falciparum infected erythrocytes, but accumulates within the parasite. Kills the parasite, but has no hemolytic activity on the host cell. The polypeptide is Dermaseptin-S3 (Phyllomedusa sauvagei (Sauvage's leaf frog)).